The primary structure comprises 150 residues: 3-hydroxyacyl-[acyl-carrier-protein] dehydratase FabZ (150 aa).

His-57 is a catalytic residue.

Belongs to the thioester dehydratase family. FabZ subfamily.

The protein resides in the cytoplasm. The catalysed reaction is a (3R)-hydroxyacyl-[ACP] = a (2E)-enoyl-[ACP] + H2O. Functionally, involved in unsaturated fatty acids biosynthesis. Catalyzes the dehydration of short chain beta-hydroxyacyl-ACPs and long chain saturated and unsaturated beta-hydroxyacyl-ACPs. The protein is 3-hydroxyacyl-[acyl-carrier-protein] dehydratase FabZ of Actinobacillus succinogenes (strain ATCC 55618 / DSM 22257 / CCUG 43843 / 130Z).